The following is a 268-amino-acid chain: Ubiquinone biosynthesis protein COQ4 homolog, mitochondrial (268 aa).

4 residues coordinate Zn(2+): His-171, Asp-172, His-175, and Glu-187.

It belongs to the COQ4 family. Component of a multi-subunit COQ enzyme complex. Zn(2+) is required as a cofactor.

It localises to the mitochondrion inner membrane. The catalysed reaction is a 4-hydroxy-3-methoxy-5-(all-trans-polyprenyl)benzoate + H(+) = a 2-methoxy-6-(all-trans-polyprenyl)phenol + CO2. The protein operates within cofactor biosynthesis; ubiquinone biosynthesis. Functionally, lyase that catalyzes the C1-decarboxylation of 4-hydroxy-3-methoxy-5-(all-trans-polyprenyl)benzoic acid into 2-methoxy-6-(all-trans-polyprenyl)phenol during ubiquinone biosynthesis. The sequence is that of Ubiquinone biosynthesis protein COQ4 homolog, mitochondrial from Drosophila yakuba (Fruit fly).